Consider the following 320-residue polypeptide: TPR repeat-containing protein MJ0263 (320 aa).

TPR repeat units follow at residues 12–45, 46–79, 80–113, 114–147, 148–181, 182–215, 216–249, 250–283, and 289–320; these read ILKDVVNALECADKGNFDKALEYLEKAQKVDKDN, PLVLYVKGIVLKLKGDMEKAEKYFECLENIEGTS, LLSLGNLICLTFVKGEYERTLKYIEKLSRLSKPC, YLSPFHKALIYIEFGEFEKALEALDEFLKIYPNL, TSILRQKASILEILGKLDEALDCVNKILSIKKDD, AHAWYLKGRILKKLGNIKEALDALKMAINLNENL, VHVYKDIAYLELANNNYEEALNYITKYLEKFPND, VEAKFYLALIYENLNKVDDALKIYDKIISNKNVK, and KSSILNKARILEKLGKIEEAVETYNKAFDNNI.

In Methanocaldococcus jannaschii (strain ATCC 43067 / DSM 2661 / JAL-1 / JCM 10045 / NBRC 100440) (Methanococcus jannaschii), this protein is TPR repeat-containing protein MJ0263.